The chain runs to 181 residues: Large ribosomal subunit protein uL5c (181 aa).

It belongs to the universal ribosomal protein uL5 family. Part of the 50S ribosomal subunit; contacts the 5S rRNA.

The protein resides in the plastid. Its function is as follows. Binds 5S rRNA, forms part of the central protuberance of the 50S subunit. The sequence is that of Large ribosomal subunit protein uL5c (rpl5) from Helicosporidium sp. subsp. Simulium jonesii (Green alga).